The chain runs to 681 residues: Protein asunder (681 aa).

The segment at 574 to 619 is disordered; it reads PGASHLRSYTESPLSPERLEPTSSASNSSSSILKASKRRMSSSGQR. A Nuclear localization signal (NLS) motif is present at residues 606–612; sequence LKASKRR.

Belongs to the Integrator subunit 13 family. In terms of assembly, belongs to the multiprotein complex Integrator, at least composed of IntS1, IntS2, IntS3, IntS4, omd/IntS5, IntS6, defl/IntS7, IntS8, IntS9, IntS10, IntS11, IntS12, asun/IntS13, IntS14 and IntS15. The core complex associates with protein phosphatase 2A subunits mts/PP2A and Pp2A-29B, to form the Integrator-PP2A (INTAC) complex. In terms of processing, phosphorylated.

It localises to the nucleus. It is found in the cytoplasm. The protein localises to the perinuclear region. In terms of biological role, component of the integrator complex, a multiprotein complex that terminates RNA polymerase II (Pol II) transcription in the promoter-proximal region of genes. The integrator complex provides a quality checkpoint during transcription elongation by driving premature transcription termination of transcripts that are unfavorably configured for transcriptional elongation: the complex terminates transcription by (1) catalyzing dephosphorylation of the C-terminal domain (CTD) of Pol II subunit Polr2A/Rbp1 and Spt5, and (2) degrading the exiting nascent RNA transcript via endonuclease activity. The integrator complex is also involved in the 3'-end processing of the U7 snRNA, and also the spliceosomal snRNAs U1, U2, U4 and U5. The protein is Protein asunder (asun) of Drosophila virilis (Fruit fly).